Here is a 390-residue protein sequence, read N- to C-terminus: F-box/kelch-repeat protein At4g39753 (390 aa).

Low complexity predominate over residues 1–16 (MVTFWAETAASAATTS). Residues 1–33 (MVTFWAETAASAATTSKGEPPSKKRKTNPSPPP) form a disordered region. Positions 32–79 (PPSLLSLPDVLILNCLSRIPKSYYPKLSIVSKTFRDLIISIDLNHARF) constitute an F-box domain. Kelch repeat units lie at residues 139-192 (PLLV…VFDR), 193-243 (KIYV…MIQG), 245-286 (FYVR…WYSC), and 288-321 (PNSF…LIET).

The chain is F-box/kelch-repeat protein At4g39753 from Arabidopsis thaliana (Mouse-ear cress).